We begin with the raw amino-acid sequence, 242 residues long: Large ribosomal subunit protein uL1 (242 aa).

Belongs to the universal ribosomal protein uL1 family. Part of the 50S ribosomal subunit.

Functionally, binds directly to 23S rRNA. The L1 stalk is quite mobile in the ribosome, and is involved in E site tRNA release. In terms of biological role, protein L1 is also a translational repressor protein, it controls the translation of the L11 operon by binding to its mRNA. This chain is Large ribosomal subunit protein uL1, found in Streptomyces sp. (strain FRI-5).